A 151-amino-acid chain; its full sequence is Small ribosomal subunit protein uS15 (151 aa).

It belongs to the universal ribosomal protein uS15 family.

This Lumbricus rubellus (Humus earthworm) protein is Small ribosomal subunit protein uS15 (RPS13).